The following is a 329-amino-acid chain: Biotin synthase (329 aa).

A Radical SAM core domain is found at 38–262 (NTIQVSTLLS…IMPYSYIRLS (225 aa)). [4Fe-4S] cluster contacts are provided by C53, C57, and C60. Positions 97, 128, 188, and 260 each coordinate [2Fe-2S] cluster.

The protein belongs to the radical SAM superfamily. Biotin synthase family. As to quaternary structure, homodimer. Requires [4Fe-4S] cluster as cofactor. It depends on [2Fe-2S] cluster as a cofactor.

It carries out the reaction (4R,5S)-dethiobiotin + (sulfur carrier)-SH + 2 reduced [2Fe-2S]-[ferredoxin] + 2 S-adenosyl-L-methionine = (sulfur carrier)-H + biotin + 2 5'-deoxyadenosine + 2 L-methionine + 2 oxidized [2Fe-2S]-[ferredoxin]. Its pathway is cofactor biosynthesis; biotin biosynthesis; biotin from 7,8-diaminononanoate: step 2/2. Functionally, catalyzes the conversion of dethiobiotin (DTB) to biotin by the insertion of a sulfur atom into dethiobiotin via a radical-based mechanism. This Acinetobacter baylyi (strain ATCC 33305 / BD413 / ADP1) protein is Biotin synthase.